The sequence spans 496 residues: GTPase Der (496 aa).

EngA-type G domains follow at residues 3–166 (PVVA…FDNL) and 208–381 (IKLA…RSAT). GTP contacts are provided by residues 9 to 16 (GRPNVGKS), 56 to 60 (DTGGI), 118 to 121 (NKVD), 214 to 221 (GRPNVGKS), 261 to 265 (DTAGV), and 326 to 329 (NKWD). A KH-like domain is found at 382-466 (TRVGTSVLTR…PIRIQFQNSD (85 aa)).

Belongs to the TRAFAC class TrmE-Era-EngA-EngB-Septin-like GTPase superfamily. EngA (Der) GTPase family. Associates with the 50S ribosomal subunit.

Functionally, GTPase that plays an essential role in the late steps of ribosome biogenesis. This is GTPase Der from Vibrio vulnificus (strain CMCP6).